The primary structure comprises 636 residues: Threonine--tRNA ligase (636 aa).

The 63-residue stretch at 1 to 63 folds into the TGS domain; it reads MNEINVTLPD…ADGARVEIVT (63 aa). The tract at residues 243 to 534 is catalytic; sequence DHRKLGRELD…LIEHFAGNFP (292 aa). 3 residues coordinate Zn(2+): Cys335, His386, and His511.

The protein belongs to the class-II aminoacyl-tRNA synthetase family. In terms of assembly, homodimer. Zn(2+) is required as a cofactor.

Its subcellular location is the cytoplasm. It catalyses the reaction tRNA(Thr) + L-threonine + ATP = L-threonyl-tRNA(Thr) + AMP + diphosphate + H(+). Catalyzes the attachment of threonine to tRNA(Thr) in a two-step reaction: L-threonine is first activated by ATP to form Thr-AMP and then transferred to the acceptor end of tRNA(Thr). Also edits incorrectly charged L-seryl-tRNA(Thr). This Geobacter sp. (strain M21) protein is Threonine--tRNA ligase.